The sequence spans 97 residues: Large ribosomal subunit protein bL28 (97 aa).

Residues M1–H20 are disordered.

Belongs to the bacterial ribosomal protein bL28 family.

This is Large ribosomal subunit protein bL28 from Afipia carboxidovorans (strain ATCC 49405 / DSM 1227 / KCTC 32145 / OM5) (Oligotropha carboxidovorans).